Here is a 355-residue protein sequence, read N- to C-terminus: MKSGRGDESPLAAGGPARHVPVLREEVVAALDCKKGGFYLDATFGAGGYTRALLAEPETHVLAIDRDPEAIAAGRALEAESAGRLILAHGRFSTLADIAAAEGIPAFDGIVFDIGVSSMQLDQPERGFSFRGEGPLDMRMESRGPSAADLVNTADEQRLADIFYYFGEERASRRIARAIVTDRAHTPFTTTRQLAELIARVNPGKPGDIHPATRVFQALRIAVNEELLELVRALAAAEALLREGGRLVVVTFHSLEDRIVKQFLAARSGRGQAVSRPLPGEPALAPPTFILPGKQPVLPSPEEIAVNPRARSAKLRFGLRTAAPARGLESGLLPLATLPETSHPKSASHSKSRRR.

S-adenosyl-L-methionine contacts are provided by residues 47–49 (GGY), D65, F92, D113, and Q120. Positions 332–355 (LLPLATLPETSHPKSASHSKSRRR) are disordered. Residues 346-355 (SASHSKSRRR) are compositionally biased toward basic residues.

The protein belongs to the methyltransferase superfamily. RsmH family.

The protein localises to the cytoplasm. The enzyme catalyses cytidine(1402) in 16S rRNA + S-adenosyl-L-methionine = N(4)-methylcytidine(1402) in 16S rRNA + S-adenosyl-L-homocysteine + H(+). In terms of biological role, specifically methylates the N4 position of cytidine in position 1402 (C1402) of 16S rRNA. This Beijerinckia indica subsp. indica (strain ATCC 9039 / DSM 1715 / NCIMB 8712) protein is Ribosomal RNA small subunit methyltransferase H.